A 396-amino-acid polypeptide reads, in one-letter code: Putative ribosomal RNA large subunit methyltransferase YwbD (396 aa).

Residues 1 to 79 (MKLLTLKKAH…KHEQIDQAFF (79 aa)) enclose the PUA domain.

This sequence belongs to the methyltransferase superfamily. RlmI family.

It is found in the cytoplasm. The sequence is that of Putative ribosomal RNA large subunit methyltransferase YwbD (ywbD) from Bacillus subtilis (strain 168).